Consider the following 302-residue polypeptide: NAD kinase 2 (302 aa).

Catalysis depends on D78, which acts as the Proton acceptor. NAD(+) contacts are provided by residues 78-79, 152-153, D182, and 193-198; these read DG, NE, and TAYSLS.

The protein belongs to the NAD kinase family. The cofactor is a divalent metal cation.

It is found in the cytoplasm. The enzyme catalyses NAD(+) + ATP = ADP + NADP(+) + H(+). Involved in the regulation of the intracellular balance of NAD and NADP, and is a key enzyme in the biosynthesis of NADP. Catalyzes specifically the phosphorylation on 2'-hydroxyl of the adenosine moiety of NAD to yield NADP. The polypeptide is NAD kinase 2 (Prochlorococcus marinus (strain NATL2A)).